The sequence spans 205 residues: MTRIALLDYGMGNLHSAAKALEHVGATVDVTNDPKLIAKADKIVFPGVGAMRDCMQGMHEAGIDEVVRQAVFNKPVLAICVGMQALLESSEENGGVPALGIFEGAVKHFPDLGHLKVPHMGWNQVYQNDPAHPMWNNIDQDSRFYFVHSYYVEPKQSDLIAATCDYGLQFCTAIHKDNLFATQFHPEKSHTAGLQLLKNFVEWNI.

The Glutamine amidotransferase type-1 domain occupies 3–205 (RIALLDYGMG…LLKNFVEWNI (203 aa)). The active-site Nucleophile is C80. Active-site residues include H185 and E187.

In terms of assembly, heterodimer of HisH and HisF.

It is found in the cytoplasm. The enzyme catalyses 5-[(5-phospho-1-deoxy-D-ribulos-1-ylimino)methylamino]-1-(5-phospho-beta-D-ribosyl)imidazole-4-carboxamide + L-glutamine = D-erythro-1-(imidazol-4-yl)glycerol 3-phosphate + 5-amino-1-(5-phospho-beta-D-ribosyl)imidazole-4-carboxamide + L-glutamate + H(+). The catalysed reaction is L-glutamine + H2O = L-glutamate + NH4(+). The protein operates within amino-acid biosynthesis; L-histidine biosynthesis; L-histidine from 5-phospho-alpha-D-ribose 1-diphosphate: step 5/9. In terms of biological role, IGPS catalyzes the conversion of PRFAR and glutamine to IGP, AICAR and glutamate. The HisH subunit catalyzes the hydrolysis of glutamine to glutamate and ammonia as part of the synthesis of IGP and AICAR. The resulting ammonia molecule is channeled to the active site of HisF. This Acinetobacter baylyi (strain ATCC 33305 / BD413 / ADP1) protein is Imidazole glycerol phosphate synthase subunit HisH.